We begin with the raw amino-acid sequence, 425 residues long: Serine--tRNA ligase (425 aa).

231–233 (TAE) contributes to the L-serine binding site. Residue 262 to 264 (RSE) coordinates ATP. Glu-285 provides a ligand contact to L-serine. Residue 349-352 (EISS) participates in ATP binding. L-serine is bound at residue Ser-385.

The protein belongs to the class-II aminoacyl-tRNA synthetase family. Type-1 seryl-tRNA synthetase subfamily. As to quaternary structure, homodimer. The tRNA molecule binds across the dimer.

It localises to the cytoplasm. The enzyme catalyses tRNA(Ser) + L-serine + ATP = L-seryl-tRNA(Ser) + AMP + diphosphate + H(+). It catalyses the reaction tRNA(Sec) + L-serine + ATP = L-seryl-tRNA(Sec) + AMP + diphosphate + H(+). Its pathway is aminoacyl-tRNA biosynthesis; selenocysteinyl-tRNA(Sec) biosynthesis; L-seryl-tRNA(Sec) from L-serine and tRNA(Sec): step 1/1. In terms of biological role, catalyzes the attachment of serine to tRNA(Ser). Is also able to aminoacylate tRNA(Sec) with serine, to form the misacylated tRNA L-seryl-tRNA(Sec), which will be further converted into selenocysteinyl-tRNA(Sec). The protein is Serine--tRNA ligase of Alkaliphilus oremlandii (strain OhILAs) (Clostridium oremlandii (strain OhILAs)).